Reading from the N-terminus, the 2055-residue chain is Citron rho-interacting kinase (2055 aa).

Positions 97-359 (FEVRSLVGCG…FEGLCCHPFF (263 aa)) constitute a Protein kinase domain. Residues 103–111 (VGCGHFAEV) and K126 contribute to the ATP site. The active-site Proton acceptor is D221. One can recognise an AGC-kinase C-terminal domain in the interval 360–430 (ARTDWNNIRN…SKALGYLGRS (71 aa)). The tract at residues 375–398 (VPTLKSDDDTSNFDEPEKNSWVSS) is disordered. 3 coiled-coil regions span residues 457-747 (LQDS…AQVS), 773-1238 (IKKD…LEYQ), and 1284-1318 (YNEL…AREE). The tract at residues 1349–1376 (PEHQPSAMSLLAPPSSRRKEASTPEEFS) is disordered. A compositionally biased stretch (low complexity) spans 1353-1363 (PSAMSLLAPPS). A compositionally biased stretch (basic and acidic residues) spans 1365 to 1376 (RRKEASTPEEFS). Residues 1388 to 1437 (PHRFNVGLNMRATKCAVCLDTVHFGRQASKCLECQVMCHPKCSTCLPATC) form a Phorbol-ester/DAG-type zinc finger. The PH domain maps to 1469 to 1589 (SLHLEGWMKV…WVTALESVVA (121 aa)). The 291-residue stretch at 1617-1907 (RLDMNCTLPF…RYLGPAISSG (291 aa)) folds into the CNH domain. The disordered stretch occupies residues 1932-2040 (SGTEQHRVPS…RGRLPAGAVR (109 aa)). Polar residues predominate over residues 1939 to 1948 (VPSTSRSSPN). The segment covering 1974-2031 (SHPREPSTPHRYRDREGRTELRRDKSPGRPLEREKSPGRMLSTRRERSPGRLFEDSSR) has biased composition (basic and acidic residues).

It belongs to the protein kinase superfamily. AGC Ser/Thr protein kinase family. In terms of assembly, homodimer. Directly interacts with KIF14 depending on the activation state (stronger interaction with the kinase-dead form). Interacts with TTC3.

It is found in the cytoplasm. It catalyses the reaction L-seryl-[protein] + ATP = O-phospho-L-seryl-[protein] + ADP + H(+). The enzyme catalyses L-threonyl-[protein] + ATP = O-phospho-L-threonyl-[protein] + ADP + H(+). In terms of biological role, plays a role in cytokinesis. Required for KIF14 localization to the central spindle and midbody. Putative RHO/RAC effector that binds to the GTP-bound forms of RHO and RAC1. It probably binds p21 with a tighter specificity in vivo. Displays serine/threonine protein kinase activity. Plays an important role in the regulation of cytokinesis and the development of the central nervous system. Phosphorylates MYL9/MLC2. In Rattus norvegicus (Rat), this protein is Citron rho-interacting kinase.